The sequence spans 1039 residues: DIS3-like exonuclease 1 (1039 aa).

A CSD1 domain is found at Pro221–Asn309. In terms of domain architecture, CSD2 spans Val359 to Asn425. Residues Arg458–Asn807 form the RNB domain.

Belongs to the RNR ribonuclease family. Component of the RNA exosome complex. Requires Mg(2+) as cofactor.

It is found in the cytoplasm. It catalyses the reaction Exonucleolytic cleavage in the 3'- to 5'-direction to yield nucleoside 5'-phosphates.. Functionally, catalytic component of the RNA exosome complex which has 3'-&gt;5' exoribonuclease activity and participates in a multitude of cellular RNA processing and degradation events. This Xenopus tropicalis (Western clawed frog) protein is DIS3-like exonuclease 1 (dis3l).